The following is a 354-amino-acid chain: Biotin synthase (354 aa).

The 219-residue stretch at Asn40 to Arg258 folds into the Radical SAM core domain. Residues Cys55, Cys59, and Cys62 each coordinate [4Fe-4S] cluster. [2Fe-2S] cluster-binding residues include Cys99, Cys130, Cys190, and Arg262.

It belongs to the radical SAM superfamily. Biotin synthase family. As to quaternary structure, homodimer. [4Fe-4S] cluster serves as cofactor. It depends on [2Fe-2S] cluster as a cofactor.

It catalyses the reaction (4R,5S)-dethiobiotin + (sulfur carrier)-SH + 2 reduced [2Fe-2S]-[ferredoxin] + 2 S-adenosyl-L-methionine = (sulfur carrier)-H + biotin + 2 5'-deoxyadenosine + 2 L-methionine + 2 oxidized [2Fe-2S]-[ferredoxin]. It functions in the pathway cofactor biosynthesis; biotin biosynthesis; biotin from 7,8-diaminononanoate: step 2/2. Its function is as follows. Catalyzes the conversion of dethiobiotin (DTB) to biotin by the insertion of a sulfur atom into dethiobiotin via a radical-based mechanism. The chain is Biotin synthase from Hahella chejuensis (strain KCTC 2396).